Here is a 122-residue protein sequence, read N- to C-terminus: Double-headed protease inhibitor, submandibular gland (122 aa).

Kazal-like domains follow at residues 10 to 70 and 71 to 121; these read GGRK…ECDI and ECTQ…QCQS. Intrachain disulfides connect Cys-16/Cys-50, Cys-28/Cys-47, Cys-36/Cys-68, Cys-72/Cys-101, Cys-79/Cys-98, and Cys-87/Cys-119.

It is found in the secreted. Functionally, this inhibitor is composed of two homologous actively inhibiting halves: one which inhibits trypsin, the other which inhibits elastase. This is Double-headed protease inhibitor, submandibular gland from Panthera uncia (Snow leopard).